Here is a 148-residue protein sequence, read N- to C-terminus: Nucleoside diphosphate kinase (148 aa).

K9, F57, R85, T91, R102, and N112 together coordinate ATP. Phosphothreonine is present on T91. Catalysis depends on H115, which acts as the Pros-phosphohistidine intermediate. S122 bears the Phosphoserine mark.

The protein belongs to the NDK family. As to quaternary structure, homotetramer. Requires Mg(2+) as cofactor.

It is found in the cytoplasm. The catalysed reaction is a 2'-deoxyribonucleoside 5'-diphosphate + ATP = a 2'-deoxyribonucleoside 5'-triphosphate + ADP. It carries out the reaction a ribonucleoside 5'-diphosphate + ATP = a ribonucleoside 5'-triphosphate + ADP. Functionally, major role in the synthesis of nucleoside triphosphates other than ATP. The ATP gamma phosphate is transferred to the NDP beta phosphate via a ping-pong mechanism, using a phosphorylated active-site intermediate. This chain is Nucleoside diphosphate kinase, found in Bacillus licheniformis (strain ATCC 14580 / DSM 13 / JCM 2505 / CCUG 7422 / NBRC 12200 / NCIMB 9375 / NCTC 10341 / NRRL NRS-1264 / Gibson 46).